We begin with the raw amino-acid sequence, 224 residues long: Urease accessory protein UreF 2 (224 aa).

This sequence belongs to the UreF family. As to quaternary structure, ureD, UreF and UreG form a complex that acts as a GTP-hydrolysis-dependent molecular chaperone, activating the urease apoprotein by helping to assemble the nickel containing metallocenter of UreC. The UreE protein probably delivers the nickel.

It localises to the cytoplasm. Required for maturation of urease via the functional incorporation of the urease nickel metallocenter. This Pseudomonas syringae pv. tomato (strain ATCC BAA-871 / DC3000) protein is Urease accessory protein UreF 2.